Here is a 625-residue protein sequence, read N- to C-terminus: Pentatricopeptide repeat-containing protein At2g36980, mitochondrial (625 aa).

The N-terminal 7 residues, 1–7 (MSVLVRL), are a transit peptide targeting the mitochondrion. PPR repeat units follow at residues 3-33 (VLVR…MPEL), 34-68 (DTVA…DAKP), 69-103 (DDYS…GFCA), 104-134 (SLPV…MCCD), 137-167 (NEVT…MPKR), 168-202 (VAFA…EFKP), 203-238 (DCYT…GWSS), 239-269 (AVEA…IEVL), 270-300 (TQVS…APEK), 301-335 (NIVT…GVDS), 336-370 (DHFA…GFQG), 371-401 (YAYV…IANK), 402-436 (DLVS…GIKP), 437-471 (DNVT…YRIP), and 473-503 (EVDH…YSSL). The type E motif stretch occupies residues 512–587 (SWETLLGACS…TPGCSWIEVG (76 aa)). The interval 588–618 (NQVSTFVVGDSSHPRLEELSETLNCLQHEMR) is type E(+) motif.

Belongs to the PPR family. PCMP-E subfamily.

Its subcellular location is the mitochondrion. The chain is Pentatricopeptide repeat-containing protein At2g36980, mitochondrial (PCMP-E73) from Arabidopsis thaliana (Mouse-ear cress).